The following is a 71-amino-acid chain: Permeability factor 2 (71 aa).

Intrachain disulfides connect C7–C33 and C9–C49.

Belongs to the intercrine alpha (chemokine CxC) family. As to quaternary structure, homodimer.

Its subcellular location is the secreted. In terms of biological role, has chemotactic activity for neutrophils. The protein is Permeability factor 2 of Oryctolagus cuniculus (Rabbit).